The chain runs to 127 residues: Small ribosomal subunit protein uS11 (127 aa).

The protein belongs to the universal ribosomal protein uS11 family. Part of the 30S ribosomal subunit. Interacts with proteins S7 and S18. Binds to IF-3.

In terms of biological role, located on the platform of the 30S subunit, it bridges several disparate RNA helices of the 16S rRNA. Forms part of the Shine-Dalgarno cleft in the 70S ribosome. The polypeptide is Small ribosomal subunit protein uS11 (Chlorobium phaeobacteroides (strain DSM 266 / SMG 266 / 2430)).